Here is a 320-residue protein sequence, read N- to C-terminus: Cytochrome f (320 aa).

The N-terminal stretch at 1–35 is a signal peptide; it reads MQTRKTFSWIKEQITRSISASLMIYIITRTSISSA. 4 residues coordinate heme: Tyr36, Cys56, Cys59, and His60. Residues 286-306 traverse the membrane as a helical segment; the sequence is VQGLLFFLASVILAQIFLVLK.

Belongs to the cytochrome f family. In terms of assembly, the 4 large subunits of the cytochrome b6-f complex are cytochrome b6, subunit IV (17 kDa polypeptide, petD), cytochrome f and the Rieske protein, while the 4 small subunits are PetG, PetL, PetM and PetN. The complex functions as a dimer. Requires heme as cofactor.

It is found in the plastid. Its subcellular location is the chloroplast thylakoid membrane. Functionally, component of the cytochrome b6-f complex, which mediates electron transfer between photosystem II (PSII) and photosystem I (PSI), cyclic electron flow around PSI, and state transitions. The polypeptide is Cytochrome f (Panax ginseng (Korean ginseng)).